Reading from the N-terminus, the 570-residue chain is MRARSALPRSALPRLLLPLLLLPAAGPAQFHGEKGISIPDHGFCQPISIPLCTDIAYNQTIMPNLLGHTNQEDAGLEVHQFYPLVKVQCSPELRFFLCSMYAPVCTVLEQAIPPCRSICERARQGCEALMNKFGFQWPERLRCEHFPRHGAEQICVGQNHSEDGTPALLTTAPPSGLQPGAGGTPGGPGGGGAPPRYATLEHPFHCPRVLKVPSYLSYKFLGERDCAAPCEPARPDGSMFFSHHHTRFARLWILTWSVLCCASTFFTVTTSLVAMQRFRYPERPIIFLSGCYTMVSVAYIAGFVLQERVVCNERFSEDGYRTVGQGTKKEGCTILFMMLYFFSMASSIWWVILSLTWFLAAGMKWGHAAIEANSQYFHLAAWAVPAVKTITILAMGQIDGDLLSGVCFVGLNRLDPLRGFVLAPLFVYLFIGTSFLLAGFVSLFRIRTIMKHDGTKTEPLERLMVRIGVFSVLYTVPATIVIACYFYEQAFREHWERSWVSQHCKSLAIPCPAHYTPRTSPDFTVYMIKYLMTLIVGITSGFWIWSGKTLHSWRKFYTRLTNSRHGETTV.

An N-terminal signal peptide occupies residues 1-28 (MRARSALPRSALPRLLLPLLLLPAAGPA). Topologically, residues 29 to 252 (QFHGEKGISI…HHHTRFARLW (224 aa)) are extracellular. The FZ domain maps to 39 to 158 (PDHGFCQPIS…HGAEQICVGQ (120 aa)). 5 disulfide bridges follow: cysteine 44–cysteine 105, cysteine 52–cysteine 98, cysteine 89–cysteine 126, cysteine 115–cysteine 155, and cysteine 119–cysteine 143. A glycan (N-linked (GlcNAc...) asparagine) is linked at asparagine 58. Asparagine 159 is a glycosylation site (N-linked (GlcNAc...) asparagine). A disordered region spans residues 166–194 (PALLTTAPPSGLQPGAGGTPGGPGGGGAP). Gly residues predominate over residues 179-193 (PGAGGTPGGPGGGGA). The chain crosses the membrane as a helical span at residues 253–273 (ILTWSVLCCASTFFTVTTSLV). Residues 274 to 284 (AMQRFRYPERP) lie on the Cytoplasmic side of the membrane. A helical transmembrane segment spans residues 285-305 (IIFLSGCYTMVSVAYIAGFVL). Over 306–332 (QERVVCNERFSEDGYRTVGQGTKKEGC) the chain is Extracellular. The chain crosses the membrane as a helical span at residues 333–353 (TILFMMLYFFSMASSIWWVIL). The Cytoplasmic portion of the chain corresponds to 354–375 (SLTWFLAAGMKWGHAAIEANSQ). The helical transmembrane segment at 376–396 (YFHLAAWAVPAVKTITILAMG) threads the bilayer. At 397 to 419 (QIDGDLLSGVCFVGLNRLDPLRG) the chain is on the extracellular side. A helical membrane pass occupies residues 420 to 440 (FVLAPLFVYLFIGTSFLLAGF). Residues 441-466 (VSLFRIRTIMKHDGTKTEPLERLMVR) lie on the Cytoplasmic side of the membrane. A helical transmembrane segment spans residues 467-487 (IGVFSVLYTVPATIVIACYFY). At 488–524 (EQAFREHWERSWVSQHCKSLAIPCPAHYTPRTSPDFT) the chain is on the extracellular side. The chain crosses the membrane as a helical span at residues 525 to 545 (VYMIKYLMTLIVGITSGFWIW). Topologically, residues 546–570 (SGKTLHSWRKFYTRLTNSRHGETTV) are cytoplasmic. Positions 548-553 (KTLHSW) match the Lys-Thr-X-X-X-Trp motif, mediates interaction with the PDZ domain of Dvl family members motif. A PDZ-binding motif is present at residues 568 to 570 (TTV).

Belongs to the G-protein coupled receptor Fz/Smo family. In terms of processing, ubiquitinated by ZNRF3, leading to its degradation by the proteasome. As to expression, widely expressed. Most abundant in kidney, liver, uterus, ovary and heart. Lower levels seen in brain and intestine. Extremely low in calvaria, mammary glands and testis.

The protein localises to the membrane. The protein resides in the cell membrane. Receptor for Wnt proteins. Most of frizzled receptors are coupled to the beta-catenin canonical signaling pathway, which leads to the activation of disheveled proteins, inhibition of GSK-3 kinase, nuclear accumulation of beta-catenin and activation of Wnt target genes. A second signaling pathway involving PKC and calcium fluxes has been seen for some family members, but it is not yet clear if it represents a distinct pathway or if it can be integrated in the canonical pathway, as PKC seems to be required for Wnt-mediated inactivation of GSK-3 kinase. Both pathways seem to involve interactions with G-proteins. May be involved in transduction and intercellular transmission of polarity information during tissue morphogenesis and/or in differentiated tissues. Activation by Wnt5A stimulates PKC activity via a G-protein-dependent mechanism. This is Frizzled-2 (Fzd2) from Rattus norvegicus (Rat).